A 252-amino-acid polypeptide reads, in one-letter code: MSDNNIKIIIAPAKKMRVDQDTFLVKSEPAFLDKTQELLDFLKTRSFNQLQDLWKANDNIVRTNQHNLVTSELDSNLTPALLAFSGIQYQYLAGDVLPQEGLDYLQDHLRILSGFYGILRPFDGIIPYRLELKTQMTGFKYYSLYNFWKDLPYQELFADTDTVINLASLEYSRLISPYLKDSQKMITIKFLENKNGKWRQSATHAKMARGEMVRFAAKEGINRPEDLKEFSDFGYVFSAADSTKENYIFKKL.

Belongs to the UPF0246 family.

The polypeptide is UPF0246 protein LJ_0535 (Lactobacillus johnsonii (strain CNCM I-12250 / La1 / NCC 533)).